The primary structure comprises 604 residues: MAGDVEGFCSSIHDTSVSAGFRALYEEGLLLDVTLVIEDHQFQAHKALLATQSDYFRIMFTADMRERDQDKIHLKGLTATGFSHVLQFMYYGTIELSMNTVHEILQAAMYVQLIEVVKFCCSFLLAKICLENCAEIMRLLDDFGVNIEGVREKLDTFLLDNFVPLMSRPDFLSYLSFEKLMSYLDNDHLSRFPEIELYEAVQSWLRHDRRRWRHTDTIIQNIRFCLMTPTSVFEKVKTSEFYRYSRQLRYEVDQALNYFQNVHQQPLLDMKSSRIRSAKPQTTVFRGMIGHSMVNSKILLLKKPRVWWELEGPQVPLRPDCLAIVNNFVFLLGGEELGPDGEFHASSKVFRYDPRQNSWLQMADMSVPRSEFAVGVIGKFIYAVAGRTRDETFYSTERYDITNDKWEFVDPYPVNKYGHEGTVLNNKLFITGGITSSSTSKQVCVFDPSKEGTIEQRTRRTQVVTNCWENKSKMNYARCFHKMISYNGKLYVFGGVCVILRASFESQGCPSTEVYNPETDQWTILASMPIGRSGHGVTVLDKQIMVLGGLCYNGHYSDSILTFDPDENKWKEDEYPRMPCKLDGLQVCNLHFPDYVLDEVRRCN.

A BTB domain is found at 31 to 98 (LDVTLVIEDH…MYYGTIELSM (68 aa)). The BACK domain maps to 133–237 (CAEIMRLLDD…TPTSVFEKVK (105 aa)). Kelch repeat units lie at residues 328 to 379 (FVFL…VIGK), 381 to 426 (IYAV…VLNN), 428 to 473 (LFIT…NKSK), 489 to 542 (KLYV…VLDK), and 544 to 590 (IMVL…VCNL).

In terms of assembly, homodimer. Dimerization does not affect PPP2R5B-binding, but is required for its proteasomal degradation. Interacts with CUL3. Directly interacts with PPP2R5B; this interaction leads to PPP2R5B proteasomal degradation. Interacts with RBBP8/CtIP; this interaction leads to RBBP8 proteasomal degradation. Interacts with PACMP micropeptide; interaction prevents ubiquitination and degradation of RBBP8/CtIP.

It localises to the nucleus. It participates in protein modification; protein ubiquitination. Substrate-specific adapter for CUL3 E3 ubiquitin-protein ligase complex. Acts as an adapter for CUL3 to target the serine/threonine-protein phosphatase 2A (PP2A) subunit PPP2R5B for ubiquitination and subsequent proteasomal degradation, thus promoting exchange with other regulatory subunits. Acts as an adapter for CUL3 to target the DNA-end resection factor RBBP8/CtIP for ubiquitination and subsequent proteasomal degradation. Through the regulation of RBBP8/CtIP protein turnover, plays a key role in DNA damage response, favoring DNA double-strand repair through error-prone non-homologous end joining (NHEJ) over error-free, RBBP8-mediated homologous recombination (HR). This Homo sapiens (Human) protein is Kelch-like protein 15 (KLHL15).